A 1202-amino-acid chain; its full sequence is Adenine-specific methyltransferase PglX (1202 aa).

Belongs to the methyltransferase superfamily. PglX adenine methyltransferase family.

The catalysed reaction is a 2'-deoxyadenosine in DNA + S-adenosyl-L-methionine = an N(6)-methyl-2'-deoxyadenosine in DNA + S-adenosyl-L-homocysteine + H(+). BREX systems (bacteriophage exclusion) provide immunity against bacteriophage. Part of a type 1 BREX system which protects against dsDNA phage. This system allows phage adsorption but prevents phage DNA replication, without degradation of the phage DNA. Methylation of bacterial DNA by this protein guides self/non-self discrimination. Functionally, probably methylates the adenine in the fifth position of the hexamer 5'-ACRCAG-3' in genomic DNA. N(6)-methylated adenine on the fifth position of 5'-ACRCAG-3' is found in the genome; there are 1906 sites in the genomic DNA. This chain is Adenine-specific methyltransferase PglX, found in Lacticaseibacillus casei (strain Zhang) (Lactobacillus casei).